A 346-amino-acid chain; its full sequence is Melanoma-associated antigen B4 (346 aa).

Positions 1 to 18 (MPRGQKSKLRAREKRQRT) are enriched in basic residues. The interval 1-107 (MPRGQKSKLR…STSTERSLKD (107 aa)) is disordered. A compositionally biased stretch (polar residues) spans 45 to 54 (VLRDTASSSL). Over residues 92 to 101 (ASSSQASTST) the composition is skewed to low complexity. In terms of domain architecture, MAGE spans 109–307 (LTRKTKMLVQ…NNFPLLYEEA (199 aa)). Residues 311–346 (EEERAGARPRVAARRGTTAMTSAYSRATSSSSSQPM) form a disordered region. A compositionally biased stretch (low complexity) spans 318–346 (RPRVAARRGTTAMTSAYSRATSSSSSQPM).

As to expression, expressed in testis.

Its subcellular location is the cytoplasm. This is Melanoma-associated antigen B4 (MAGEB4) from Homo sapiens (Human).